The chain runs to 396 residues: ATP-dependent RNA helicase eIF4A (396 aa).

The disordered stretch occupies residues 1 to 20 (MADKGLEDVPEGQIESNYDE). The Q motif signature appears at 23–51 (DSFDAMNLKAELLRGVYAYGFERPSAIQQ). The Helicase ATP-binding domain occupies 54–224 (IMPVIKGHDV…TKFMRDPVRI (171 aa)). ATP is bound at residue 67 to 74 (AQSGTGKT). Positions 172-175 (DEAD) match the DEAD box motif. In terms of domain architecture, Helicase C-terminal spans 235-396 (GIKQFYIAVE…EMPMNVADLI (162 aa)).

It belongs to the DEAD box helicase family. eIF4A subfamily. Component of the eIF4F complex, which composition varies with external and internal environmental conditions. It is composed of at least eIF4A, eIF4E and eIF4G.

The protein localises to the cytoplasm. It carries out the reaction ATP + H2O = ADP + phosphate + H(+). Its function is as follows. ATP-dependent RNA helicase which is a subunit of the eIF4F complex involved in cap recognition and is required for mRNA binding to ribosome. In the current model of translation initiation, eIF4A unwinds RNA secondary structures in the 5'-UTR of mRNAs which is necessary to allow efficient binding of the small ribosomal subunit, and subsequent scanning for the initiator codon. In Phaeosphaeria nodorum (strain SN15 / ATCC MYA-4574 / FGSC 10173) (Glume blotch fungus), this protein is ATP-dependent RNA helicase eIF4A (TIF1).